The chain runs to 457 residues: Siroheme synthase (457 aa).

The segment at 1 to 204 (MDHLPIFCQL…NDQKAITETT (204 aa)) is precorrin-2 dehydrogenase /sirohydrochlorin ferrochelatase. NAD(+)-binding positions include 22–23 (DV) and 43–44 (LA). Ser-128 carries the post-translational modification Phosphoserine. Residues 216–457 (GEVVLVGAGP…RDKLNWFSNH (242 aa)) form a uroporphyrinogen-III C-methyltransferase region. Pro-225 lines the S-adenosyl-L-methionine pocket. Asp-248 functions as the Proton acceptor in the catalytic mechanism. The active-site Proton donor is Lys-270. S-adenosyl-L-methionine contacts are provided by residues 301–303 (GGD), Ile-306, 331–332 (TA), Met-382, and Gly-411.

In the N-terminal section; belongs to the precorrin-2 dehydrogenase / sirohydrochlorin ferrochelatase family. This sequence in the C-terminal section; belongs to the precorrin methyltransferase family.

It catalyses the reaction uroporphyrinogen III + 2 S-adenosyl-L-methionine = precorrin-2 + 2 S-adenosyl-L-homocysteine + H(+). The catalysed reaction is precorrin-2 + NAD(+) = sirohydrochlorin + NADH + 2 H(+). It carries out the reaction siroheme + 2 H(+) = sirohydrochlorin + Fe(2+). It participates in cofactor biosynthesis; adenosylcobalamin biosynthesis; precorrin-2 from uroporphyrinogen III: step 1/1. It functions in the pathway cofactor biosynthesis; adenosylcobalamin biosynthesis; sirohydrochlorin from precorrin-2: step 1/1. Its pathway is porphyrin-containing compound metabolism; siroheme biosynthesis; precorrin-2 from uroporphyrinogen III: step 1/1. The protein operates within porphyrin-containing compound metabolism; siroheme biosynthesis; siroheme from sirohydrochlorin: step 1/1. It participates in porphyrin-containing compound metabolism; siroheme biosynthesis; sirohydrochlorin from precorrin-2: step 1/1. Multifunctional enzyme that catalyzes the SAM-dependent methylations of uroporphyrinogen III at position C-2 and C-7 to form precorrin-2 via precorrin-1. Then it catalyzes the NAD-dependent ring dehydrogenation of precorrin-2 to yield sirohydrochlorin. Finally, it catalyzes the ferrochelation of sirohydrochlorin to yield siroheme. The chain is Siroheme synthase from Escherichia coli O45:K1 (strain S88 / ExPEC).